The chain runs to 197 residues: MFGCLVAGRLVQTDAQQVASDKFVFNLPDYEHVNHVVVFLLGTVPFPEGLGGAVYLCVPGGAAGQVWQLLGFITNEKPSAIFRISGLKAGEGSSHPFGMMDAPAAPSMAQVGVSVEGLHLLAQQTPVSSSAVSTLDSFTQFTQKMLDSLFNFTSSFALSQSQMSPNPSEMFIPASSIRRWYENFQRRLMQNPNFWKT.

It belongs to the OPI10 family.

The protein localises to the cytoplasm. It localises to the cytosol. Its subcellular location is the nucleus. Acts as a specific nuclear import carrier for hsp70 proteins following heat-shock stress: acts by mediating the nucleoporin-dependent translocation of ATP-bound hsp70 proteins into the nucleus. hsp70 proteins import is required to protect cells from heat shock damages. This is Protein Hikeshi (hikeshi) from Danio rerio (Zebrafish).